The chain runs to 509 residues: Maturase K (509 aa).

It belongs to the intron maturase 2 family. MatK subfamily.

It localises to the plastid. It is found in the chloroplast. In terms of biological role, usually encoded in the trnK tRNA gene intron. Probably assists in splicing its own and other chloroplast group II introns. In Nicotiana paniculata, this protein is Maturase K.